A 204-amino-acid chain; its full sequence is MKRLVTGLLALSLFLAACGQDSDQQKDGNKEKDDKAKTEQQDKKTNDSSKDKKDNKDDSKDVNKDNKDNSANDNQQQSNSNATNNDQNQTNNNQANNNQKSSYVAPYYGQNAAPVARQIYPFNGNKTQALQQLPNFQTALNAANNEANKFGSNNKVYNDYSIEEHNGNYKYVFSFKDPNANGKYSIVTVDYTGQAMVTDPNYQQ.

Positions 1–17 are cleaved as a signal peptide; it reads MKRLVTGLLALSLFLAA. The segment at 17 to 100 is disordered; the sequence is ACGQDSDQQK…NNNQANNNQK (84 aa). The N-palmitoyl cysteine moiety is linked to residue cysteine 18. Residue cysteine 18 is the site of S-diacylglycerol cysteine attachment. Positions 23-70 are enriched in basic and acidic residues; the sequence is DQQKDGNKEKDDKAKTEQQDKKTNDSSKDKKDNKDDSKDVNKDNKDNS. Over residues 71 to 100 the composition is skewed to low complexity; the sequence is ANDNQQQSNSNATNNDQNQTNNNQANNNQK.

The protein localises to the cell membrane. This is an uncharacterized protein from Staphylococcus aureus (strain MSSA476).